The sequence spans 689 residues: MSGRAKVAGEEALVGVAAPQPVPAGILDECTNVTVSQPPSPPRPEESDCAGCLETPGEAAALPCGHSLCRGCAQRAADAAGPCCPRCRARGAGWARRRARDDWQADAEVLGERARRGPPERCRPRRDGGAAAAGPRPEQESRAAPAEPEFIFRAPIKLSKPGEFREEYESLRKLREEKLQEEKTSEDQIHKLLPEDTEIGKRKMDEQKKRDEPVVLKTNLEHCPARLSDSENEEPSRGKMIQTHRSAFVSKSSSYSLAFLAGNLNSKMERSQSCSDTGQDRAKSRLRAAPTSKAKATAMTPTSNPIIGVLLSTRNHRCLSAPDLTVEKRLPFSSLSALASLHKPERSISPESNDSISEELNHFKPIVCSPCTPPKRLPDGRVLSPLIIKSTPRNLNRSLQKQTSYEASPRILKKWEQIFQERQIKKTLSKATLTSLAPETGDDLLVSEVTQSNKEKPLLALNTRLSSGQVLSECTGPTAPDLDYFSSVSQTKAEQGSDRKKNTEIPLETCCSSELPVGASGTSLEREQSERSGSSPDAKLDKTRITASMKISAVNSVLPKNSVLGGVLKTKKQLKTVNHFDLPNGVLADNLGDEPLPSLRRGRKRRCKTKHLEQNGSLKKLRQSSGEVGLAPTDPVLREMEQKLQQEEEDRQLALQLQRMFDNERRTVSRRKGSVDQYLLRSSSMAGAK.

The segment at 49 to 88 (CAGCLETPGEAAALPCGHSLCRGCAQRAADAAGPCCPRCR) adopts an RING-type zinc-finger fold. Disordered regions lie at residues 95–148 (ARRR…PAEP) and 178–238 (KLQE…PSRG). Basic and acidic residues-rich tracts occupy residues 110–128 (LGERARRGPPERCRPRRDG) and 178–224 (KLQE…EHCP). Residues 186-194 (EDQIHKLLP) carry the UMI motif motif. Residues Ser228 and Ser230 each carry the phosphoserine modification. A Glycyl lysine isopeptide (Lys-Gly) (interchain with G-Cter in SUMO2) cross-link involves residue Lys267. Residues 268–277 (MERSQSCSDT) are compositionally biased toward polar residues. Positions 268-299 (MERSQSCSDTGQDRAKSRLRAAPTSKAKATAM) are disordered. Position 320 is a phosphoserine (Ser320). Lys343 participates in a covalent cross-link: Glycyl lysine isopeptide (Lys-Gly) (interchain with G-Cter in SUMO2). Residues Ser384 and Ser390 each carry the phosphoserine modification. Thr391 bears the Phosphothreonine mark. Phosphoserine is present on Ser466. The segment at 489–542 (SQTKAEQGSDRKKNTEIPLETCCSSELPVGASGTSLEREQSERSGSSPDAKLDK) is disordered. Lys492 participates in a covalent cross-link: Glycyl lysine isopeptide (Lys-Gly) (interchain with G-Cter in SUMO2). Residue Ser625 is modified to Phosphoserine. The short motif at 646–663 (QEEEDRQLALQLQRMFDN) is the MIU motif element. An LR motif motif is present at residues 670–682 (RRKGSVDQYLLRS). Ser674 carries the phosphoserine modification.

The protein belongs to the RNF169 family. As to quaternary structure, interacts with DYRK1B. In terms of processing, phosphorylated by DYRK1A; phosphorylation increases RNF169 ability to block accumulation of TP53BP1 at the DSB sites.

Its subcellular location is the chromosome. The protein resides in the nucleus. The protein localises to the nucleoplasm. The catalysed reaction is S-ubiquitinyl-[E2 ubiquitin-conjugating enzyme]-L-cysteine + [acceptor protein]-L-lysine = [E2 ubiquitin-conjugating enzyme]-L-cysteine + N(6)-ubiquitinyl-[acceptor protein]-L-lysine.. Its pathway is protein modification; protein ubiquitination. Probable E3 ubiquitin-protein ligase that acts as a regulator of double-strand breaks (DSBs) repair following DNA damage. Functions in a non-canonical fashion to harness RNF168-mediated protein recruitment to DSB-containing chromatin, thereby contributing to regulation of DSB repair pathway utilization. Once recruited to DSB repair sites by recognizing and binding ubiquitin catalyzed by RNF168, competes with TP53BP1 and BRCA1 for association with RNF168-modified chromatin, thereby favouring homologous recombination repair (HRR) and single-strand annealing (SSA) instead of non-homologous end joining (NHEJ) mediated by TP53BP1. E3 ubiquitin-protein ligase activity is not required for regulation of DSBs repair. In Bos taurus (Bovine), this protein is E3 ubiquitin-protein ligase RNF169 (RNF169).